Here is a 263-residue protein sequence, read N- to C-terminus: 3-methyl-2-oxobutanoate hydroxymethyltransferase (263 aa).

2 residues coordinate Mg(2+): aspartate 45 and aspartate 84. 3-methyl-2-oxobutanoate-binding positions include 45–46 (DS), aspartate 84, and lysine 112. Residue glutamate 114 coordinates Mg(2+). The active-site Proton acceptor is the glutamate 180.

This sequence belongs to the PanB family. Homodecamer; pentamer of dimers. It depends on Mg(2+) as a cofactor.

The protein resides in the cytoplasm. It catalyses the reaction 3-methyl-2-oxobutanoate + (6R)-5,10-methylene-5,6,7,8-tetrahydrofolate + H2O = 2-dehydropantoate + (6S)-5,6,7,8-tetrahydrofolate. Its pathway is cofactor biosynthesis; (R)-pantothenate biosynthesis; (R)-pantoate from 3-methyl-2-oxobutanoate: step 1/2. Catalyzes the reversible reaction in which hydroxymethyl group from 5,10-methylenetetrahydrofolate is transferred onto alpha-ketoisovalerate to form ketopantoate. This chain is 3-methyl-2-oxobutanoate hydroxymethyltransferase, found in Klebsiella pneumoniae subsp. pneumoniae (strain ATCC 700721 / MGH 78578).